Here is a 240-residue protein sequence, read N- to C-terminus: Ubiquinone biosynthesis O-methyltransferase (240 aa).

S-adenosyl-L-methionine is bound by residues R44, G64, D85, and M129.

This sequence belongs to the methyltransferase superfamily. UbiG/COQ3 family.

It carries out the reaction a 3-demethylubiquinol + S-adenosyl-L-methionine = a ubiquinol + S-adenosyl-L-homocysteine + H(+). The enzyme catalyses a 3-(all-trans-polyprenyl)benzene-1,2-diol + S-adenosyl-L-methionine = a 2-methoxy-6-(all-trans-polyprenyl)phenol + S-adenosyl-L-homocysteine + H(+). Its pathway is cofactor biosynthesis; ubiquinone biosynthesis. Its function is as follows. O-methyltransferase that catalyzes the 2 O-methylation steps in the ubiquinone biosynthetic pathway. The chain is Ubiquinone biosynthesis O-methyltransferase from Escherichia coli O8 (strain IAI1).